The chain runs to 316 residues: ATP synthase gamma chain (316 aa).

Belongs to the ATPase gamma chain family. As to quaternary structure, F-type ATPases have 2 components, CF(1) - the catalytic core - and CF(0) - the membrane proton channel. CF(1) has five subunits: alpha(3), beta(3), gamma(1), delta(1), epsilon(1). CF(0) has three main subunits: a, b and c.

It is found in the cellular thylakoid membrane. In terms of biological role, produces ATP from ADP in the presence of a proton gradient across the membrane. The gamma chain is believed to be important in regulating ATPase activity and the flow of protons through the CF(0) complex. The chain is ATP synthase gamma chain from Synechococcus elongatus (strain ATCC 33912 / PCC 7942 / FACHB-805) (Anacystis nidulans R2).